Consider the following 160-residue polypeptide: Small ribosomal subunit protein uS9 (160 aa).

Belongs to the universal ribosomal protein uS9 family.

This chain is Small ribosomal subunit protein uS9, found in Xanthobacter autotrophicus (strain ATCC BAA-1158 / Py2).